The chain runs to 308 residues: 3'(2'),5'-bisphosphate nucleotidase 1 (308 aa).

Residue alanine 2 is modified to N-acetylalanine. Aspartate 51 (proton acceptor) is an active-site residue. Mg(2+)-binding residues include glutamate 74, aspartate 117, leucine 119, and aspartate 120. Threonine 122 serves as the catalytic Proton acceptor. Threonine 122 is modified (phosphothreonine). AMP contacts are provided by threonine 195, histidine 198, glycine 220, and lysine 224. Serine 240 carries the phosphoserine modification. Lysine 244 carries the N6-succinyllysine modification. A Mg(2+)-binding site is contributed by aspartate 247.

It belongs to the inositol monophosphatase superfamily. Mg(2+) is required as a cofactor. In terms of tissue distribution, highly expressed in kidney, liver, pancreas and heart. Detected at lower levels in brain, placenta, lung and skeletal muscle.

The enzyme catalyses adenosine 3',5'-bisphosphate + H2O = AMP + phosphate. It carries out the reaction adenosine 2',5'-bisphosphate + H2O = AMP + phosphate. It catalyses the reaction 3'-phosphoadenylyl sulfate + H2O = adenosine 5'-phosphosulfate + phosphate. The catalysed reaction is 1D-myo-inositol 1,4-bisphosphate + H2O = 1D-myo-inositol 4-phosphate + phosphate. The enzyme catalyses 1D-myo-inositol 1,3,4-trisphosphate + H2O = 1D-myo-inositol 3,4-bisphosphate + phosphate. Is very sensitive to inhibition by Li(+) (IC(50)=0.3 mM for hydrolysis of PAP; IC(50)=0.6 mM for hydrolysis of inositol-1,4-bis-phosphate). Is not affected by high Na(+) concentrations. Phosphatase that converts 3'(2')-phosphoadenosine 5'-phosphate (PAP) to AMP and inositol 1,4-bisphosphate (Ins(1,4)P2) to inositol 4-phosphate. Is also able to hydrolyze adenosine 3'-phosphate 5'-phosphosulfate (PAPS) to adenosine 5'-phosphosulfate (APS). Probably prevents the toxic accumulation of PAP, a compound which inhibits a variety of proteins, including PAPS-utilizing enzymes such as sulfotransferases, and RNA processing enzymes. Could also play a role in inositol recycling and phosphoinositide metabolism. Is not active on 3'-AMP, inositol-1-phosphate and inositol-1,4,5-triphosphate. This is 3'(2'),5'-bisphosphate nucleotidase 1 (BPNT1) from Homo sapiens (Human).